We begin with the raw amino-acid sequence, 1813 residues long: U3 small nucleolar RNA-associated protein 10 (1813 aa).

5 HEAT repeats span residues 245-283 (DVLI…KASL), 389-427 (SETI…LQFN), 428-464 (ESDT…DIMP), 584-621 (ADMQ…LASK), and 659-695 (IIHH…QDDS). Disordered regions lie at residues 686–705 (IRGP…STGV) and 887–912 (DLGS…SSMD). Over residues 690-705 (RSQDDSDRTRSESTGV) the composition is skewed to basic and acidic residues. 7 HEAT repeats span residues 1058–1095 (QTID…AFEH), 1189–1228 (KIAV…KAHG), 1265–1302 (LSLV…SSND), 1309–1347 (ARVL…KYGK), 1398–1437 (EALP…HVPW), 1678–1715 (LASI…LAVA), and 1769–1806 (ALLP…ILGE).

The protein belongs to the HEATR1/UTP10 family. Component of the ribosomal small subunit (SSU) processome.

The protein resides in the nucleus. It is found in the nucleolus. Its function is as follows. Involved in nucleolar processing of pre-18S ribosomal RNA. Involved in ribosome biosynthesis. The chain is U3 small nucleolar RNA-associated protein 10 from Coccidioides immitis (strain RS) (Valley fever fungus).